An 88-amino-acid polypeptide reads, in one-letter code: CRISPR-associated endoribonuclease Cas2 2 (88 aa).

Residue aspartate 8 participates in Mg(2+) binding.

It belongs to the CRISPR-associated endoribonuclease Cas2 protein family. In terms of assembly, homodimer, forms a heterotetramer with a Cas1 homodimer. Requires Mg(2+) as cofactor.

CRISPR (clustered regularly interspaced short palindromic repeat), is an adaptive immune system that provides protection against mobile genetic elements (viruses, transposable elements and conjugative plasmids). CRISPR clusters contain sequences complementary to antecedent mobile elements and target invading nucleic acids. CRISPR clusters are transcribed and processed into CRISPR RNA (crRNA). Functions as a ssRNA-specific endoribonuclease. Involved in the integration of spacer DNA into the CRISPR cassette. This is CRISPR-associated endoribonuclease Cas2 2 (cas22) from Saccharolobus solfataricus (strain ATCC 35092 / DSM 1617 / JCM 11322 / P2) (Sulfolobus solfataricus).